The sequence spans 346 residues: Methylthioribose-1-phosphate isomerase (346 aa).

Residues 46–48 (RGA), R89, and Q196 each bind substrate. D237 functions as the Proton donor in the catalytic mechanism. 247-248 (NK) contacts substrate.

This sequence belongs to the eIF-2B alpha/beta/delta subunits family. MtnA subfamily.

The enzyme catalyses 5-(methylsulfanyl)-alpha-D-ribose 1-phosphate = 5-(methylsulfanyl)-D-ribulose 1-phosphate. It participates in amino-acid biosynthesis; L-methionine biosynthesis via salvage pathway; L-methionine from S-methyl-5-thio-alpha-D-ribose 1-phosphate: step 1/6. Functionally, catalyzes the interconversion of methylthioribose-1-phosphate (MTR-1-P) into methylthioribulose-1-phosphate (MTRu-1-P). This chain is Methylthioribose-1-phosphate isomerase, found in Geobacter sp. (strain M21).